The following is a 288-amino-acid chain: General transcription factor IIE subunit 2 (288 aa).

The disordered stretch occupies residues Ala16–Asn56. A compositionally biased stretch (low complexity) spans Glu41–Asn56. Residues Ser63–Lys143 constitute a DNA-binding region (TFIIE beta).

Belongs to the TFIIE beta subunit family. As to quaternary structure, tetramer of two alpha and two beta chains.

The protein localises to the nucleus. Its function is as follows. Recruits TFIIH to the initiation complex and stimulates the RNA polymerase II C-terminal domain kinase and DNA-dependent ATPase activities of TFIIH. Both TFIIH and TFIIE are required for promoter clearance by RNA polymerase. The chain is General transcription factor IIE subunit 2 (gtf2e2) from Xenopus laevis (African clawed frog).